The following is an 887-amino-acid chain: Alanine--tRNA ligase (887 aa).

Zn(2+) contacts are provided by histidine 581, histidine 585, cysteine 683, and histidine 687.

This sequence belongs to the class-II aminoacyl-tRNA synthetase family. The cofactor is Zn(2+).

The protein resides in the cytoplasm. It catalyses the reaction tRNA(Ala) + L-alanine + ATP = L-alanyl-tRNA(Ala) + AMP + diphosphate. Functionally, catalyzes the attachment of alanine to tRNA(Ala) in a two-step reaction: alanine is first activated by ATP to form Ala-AMP and then transferred to the acceptor end of tRNA(Ala). Also edits incorrectly charged Ser-tRNA(Ala) and Gly-tRNA(Ala) via its editing domain. The polypeptide is Alanine--tRNA ligase (Ehrlichia chaffeensis (strain ATCC CRL-10679 / Arkansas)).